Reading from the N-terminus, the 254-residue chain is NAD kinase (254 aa).

The Proton acceptor role is filled by aspartate 44. Residues 44–45, 114–115, aspartate 144, alanine 152, 155–160, and alanine 179 each bind NAD(+); these read DG, NE, and TAYNYS.

Belongs to the NAD kinase family. It depends on a divalent metal cation as a cofactor.

The protein localises to the cytoplasm. The catalysed reaction is NAD(+) + ATP = ADP + NADP(+) + H(+). Involved in the regulation of the intracellular balance of NAD and NADP, and is a key enzyme in the biosynthesis of NADP. Catalyzes specifically the phosphorylation on 2'-hydroxyl of the adenosine moiety of NAD to yield NADP. This is NAD kinase from Cereibacter sphaeroides (strain ATCC 17023 / DSM 158 / JCM 6121 / CCUG 31486 / LMG 2827 / NBRC 12203 / NCIMB 8253 / ATH 2.4.1.) (Rhodobacter sphaeroides).